The primary structure comprises 125 residues: Protein ApaG (125 aa).

The ApaG domain maps to 1–125 (MINSPRVCIQ…FRLAVPTLIH (125 aa)).

This chain is Protein ApaG, found in Salmonella arizonae (strain ATCC BAA-731 / CDC346-86 / RSK2980).